Reading from the N-terminus, the 545-residue chain is MPVVSLPYKYLERLCGIDRKTIIDHLPMIGSDIERILEDQVDVEFFPSRVDLYSTEGVARAMRGFLELETGEEVYPVSPSSITFSVDENLKEVRPYIGSAVIRDIQLDNEAIISLMGVQEALHWVVGRGRAKVAIGVHDLDKVTPPFRYYGAPVTRSFIPLDYDREMTLTEIMEEHPKGRDYSHIVKDKPVMPLIEDANGNVLSFPPIINGELTRVTESSKNLLLDVTGTDERAVMTALRVLCTTLITAGGRCESVTVNGVVMPDLSPALRNINVTSCNKLLGTSFSADEIATILKKMRYGAEKSGDSTVSIRIPCYRADIMHEWDVYEDVAIGAGFGNLEAELPATFATGCEHPIIALASAIRDICSGLGYLEVMPFTLSNEDVMYTRMQREPDPKALHVLHPISEEQTLVRTDLLPLLLDLLRMNKRRELPQRIFHTGDVVSSMQTYQKLALASTHPGADFSEAYATTDALMRELGISYLPAESADPAFIPGRAVDIMVDGKKMGVFGEIHPGVLNKFDIDQPVIGIEIDLHLLFPGQKETKS.

The 77-residue stretch at 266–342 folds into the B5 domain; sequence LSPALRNINV…IGAGFGNLEA (77 aa). Residues aspartate 320, aspartate 326, glutamate 329, and aspartate 330 each coordinate Mg(2+).

This sequence belongs to the phenylalanyl-tRNA synthetase beta subunit family. Type 2 subfamily. Tetramer of two alpha and two beta subunits. Mg(2+) serves as cofactor.

The protein resides in the cytoplasm. The enzyme catalyses tRNA(Phe) + L-phenylalanine + ATP = L-phenylalanyl-tRNA(Phe) + AMP + diphosphate + H(+). This chain is Phenylalanine--tRNA ligase beta subunit, found in Methanospirillum hungatei JF-1 (strain ATCC 27890 / DSM 864 / NBRC 100397 / JF-1).